The following is a 140-amino-acid chain: Small ribosomal subunit protein uS19 (140 aa).

Residues 120 to 140 are disordered; the sequence is RPKHSAPGIGATRSSAHVSKK. The segment covering 131–140 has biased composition (polar residues); the sequence is TRSSAHVSKK.

This sequence belongs to the universal ribosomal protein uS19 family.

In terms of biological role, protein S19 forms a complex with S13 that binds strongly to the 16S ribosomal RNA. The polypeptide is Small ribosomal subunit protein uS19 (Nanoarchaeum equitans (strain Kin4-M)).